Here is a 357-residue protein sequence, read N- to C-terminus: Protein BMRF2 (357 aa).

Residues methionine 1–glycine 11 lie on the Virion surface side of the membrane. A membrane pass occupies residues alanine 12–alanine 32. At asparagine 33–histidine 46 the chain is on the virion surface side. The chain crosses the lipid bilayer at residues valine 47–alanine 67. Topologically, residues lysine 68 to alanine 70 are virion surface. Positions valine 71–leucine 91 form a transmembrane segment. The Virion surface segment spans residues arginine 92–threonine 98. Residues tryptophan 99–isoleucine 121 are membrane-embedded. Residues glutamate 122–arginine 133 lie on the Virion surface side of the membrane. Residues phenylalanine 134 to alanine 154 are membrane-embedded. Residues leucine 155 to serine 158 are Virion surface-facing. A membrane pass occupies residues alanine 159 to alanine 179. Topologically, residues arginine 180 to aspartate 217 are virion surface. An Integrin binding site motif is present at residues arginine 199 to aspartate 201. A transmembrane helix spans residues leucine 218–histidine 238. The Virion surface segment spans residues alanine 239 to glutamate 240. The hydrophobic stretch at valine 241–glycine 261 threads the membrane. The Virion surface portion of the chain corresponds to leucine 262–serine 267. A membrane pass occupies residues serine 268–leucine 288. Topologically, residues histidine 289–threonine 298 are virion surface. Positions valine 299 to methionine 319 form a transmembrane segment. Over arginine 320–arginine 335 the chain is Virion surface. A membrane pass occupies residues valine 336 to lysine 356. Position 357 (serine 357) is a topological domain, virion surface.

It belongs to the herpesviridae BMRF2 family. In terms of assembly, interacts with BDLF2. Interacts with host beta1 integrin family. In terms of processing, extensively glycosylated by O-linked oligosaccharides.

The protein localises to the virion membrane. Its subcellular location is the host cell membrane. Its function is as follows. Facilitates virus attachment to oral epithelial cells by binding to host beta1 integrin family. Participates in rearrangement of cellular actin to increase intercellular contacts by binding BDLF2 and thereby promote virus cell-to-cell spreading. This chain is Protein BMRF2, found in Homo sapiens (Human).